We begin with the raw amino-acid sequence, 450 residues long: Tubulin beta-1 chain (450 aa).

The GTP site is built by glutamine 11, glutamate 69, serine 138, glycine 142, threonine 143, glycine 144, asparagine 204, and asparagine 226. Glutamate 69 is a binding site for Mg(2+). Residues 426-450 (QDATADEDEYGEEEGDEEEYGQHDI) form a disordered region. Acidic residues predominate over residues 429–444 (TADEDEYGEEEGDEEE).

This sequence belongs to the tubulin family. Dimer of alpha and beta chains. A typical microtubule is a hollow water-filled tube with an outer diameter of 25 nm and an inner diameter of 15 nM. Alpha-beta heterodimers associate head-to-tail to form protofilaments running lengthwise along the microtubule wall with the beta-tubulin subunit facing the microtubule plus end conferring a structural polarity. Microtubules usually have 13 protofilaments but different protofilament numbers can be found in some organisms and specialized cells. The cofactor is Mg(2+).

It localises to the cytoplasm. It is found in the cytoskeleton. Tubulin is the major constituent of microtubules, a cylinder consisting of laterally associated linear protofilaments composed of alpha- and beta-tubulin heterodimers. Microtubules grow by the addition of GTP-tubulin dimers to the microtubule end, where a stabilizing cap forms. Below the cap, tubulin dimers are in GDP-bound state, owing to GTPase activity of alpha-tubulin. The sequence is that of Tubulin beta-1 chain (TUBB1) from Pisum sativum (Garden pea).